Consider the following 470-residue polypeptide: MDNLKKKYQHHLSLESASREYGPFQMLGRIQSDSDIKMLSFAGGEPNPSKFPIHKLSVSFPEVNSWEKDTNKDATVSYELSNNANEGSLDLLGALQYGQCQGIPELVKFIKDHVGQIHMPQYKDWDIKITNGNTIGLEYCLRLLVNRGDCILIEKYTYPAAITAMRPLGVKFIPIDMDENGMLPESFEKVMETWDSSLGARPHVLYTIPTGQNPTGSTLTLERRKKFLTLAKKYDIIIVEDEPYYFLQMEKYDANWKPDKQAFNISSFKKKLIPSLLHLDTDGRVLRVDSFSKLIVPGLRLGWITGNSLFIDRITRYAEVCTESPSGVSQVVLYAILNRWGQNGFLEWLQDLQNSYTMRRNALLLAADKHLPKSVCKYHSPKAGLFLWVELDKNRLICSNMDKSISEIEMEIFVELVNNGVKPVCGQLFMGEPNSADKIFFRFAYSLADLSTFEAGLERFTSTIQKYFQL.

The protein belongs to the class-I pyridoxal-phosphate-dependent aminotransferase family. The cofactor is pyridoxal 5'-phosphate.

The protein resides in the cytoplasm. The catalysed reaction is an aromatic L-alpha-amino acid + 2-oxoglutarate = an aromatic oxo-acid + L-glutamate. In terms of biological role, has aromatic amino acid transaminase activity. The sequence is that of Aromatic amino acid aminotransferase C569.07 from Schizosaccharomyces pombe (strain 972 / ATCC 24843) (Fission yeast).